Consider the following 525-residue polypeptide: G patch domain-containing protein 3 (525 aa).

Disordered regions lie at residues 54–85 and 246–317; these read ERGP…PASD and EQEE…QERT. Residues 274 to 299 are compositionally biased toward acidic residues; the sequence is DEPEDEGQQQEEEEESGSEEDDDRGE. The span at 300-317 shows a compositional bias: basic and acidic residues; that stretch reads EWERHEALHEDVTGQERT. Positions 411-459 constitute a G-patch domain; that stretch reads TKGIGRKVMERQGWAEGQGLGSRCSGVPEALDGDGQHPRCKRGLGYHGE.

As to quaternary structure, interacts with mitochondrial MAVS; the interaction is markedly increased upon viral infection.

The protein localises to the nucleus. It is found in the cytoplasm. In terms of biological role, involved in transcriptional regulation. It is able to activate transcription from CXCR4 promoter and therefore it might control neural crest cell migration involved in ocular and craniofacial development. Is a negative regulator of immune antiviral response, acting via down-regulation of RIG-I-like receptors signaling and inhibition of type I interferon production. The control mechanism involves interaction with mitochondrial MAVS and inhibition of MAVS assembly with downstream proteins implicated in antiviral response, such as TBK1 and TRAF6. This Mus musculus (Mouse) protein is G patch domain-containing protein 3 (Gpatch3).